Reading from the N-terminus, the 276-residue chain is Diaminopimelate epimerase (276 aa).

Substrate is bound by residues asparagine 13, glutamine 46, and asparagine 66. Cysteine 75 (proton donor) is an active-site residue. Residues glycine 76–asparagine 77, asparagine 159, asparagine 192, and glutamate 210–arginine 211 each bind substrate. Cysteine 219 (proton acceptor) is an active-site residue. Substrate is bound at residue glycine 220–threonine 221.

This sequence belongs to the diaminopimelate epimerase family. As to quaternary structure, homodimer.

The protein localises to the cytoplasm. The catalysed reaction is (2S,6S)-2,6-diaminopimelate = meso-2,6-diaminopimelate. It participates in amino-acid biosynthesis; L-lysine biosynthesis via DAP pathway; DL-2,6-diaminopimelate from LL-2,6-diaminopimelate: step 1/1. Its function is as follows. Catalyzes the stereoinversion of LL-2,6-diaminopimelate (L,L-DAP) to meso-diaminopimelate (meso-DAP), a precursor of L-lysine and an essential component of the bacterial peptidoglycan. The sequence is that of Diaminopimelate epimerase from Cellvibrio japonicus (strain Ueda107) (Pseudomonas fluorescens subsp. cellulosa).